We begin with the raw amino-acid sequence, 415 residues long: Corticotropin-releasing factor receptor 1 (415 aa).

An N-terminal signal peptide occupies residues 1 to 23; it reads MGRRPQLRLVKALLLLGLNPVST. The Extracellular segment spans residues 24 to 111; sequence SLQDQRCENL…CQEILNEEKK (88 aa). Disulfide bonds link Cys30–Cys54, Cys44–Cys87, and Cys68–Cys102. 5 N-linked (GlcNAc...) asparagine glycosylation sites follow: Asn38, Asn45, Asn78, Asn90, and Asn98. The tract at residues 99-108 is important for peptide agonist binding; it reads YSECQEILNE. A helical transmembrane segment spans residues 112–142; the sequence is SKVHYHVAVIINYLGHCISLVALLVAFVLFL. Residues 143–149 lie on the Cytoplasmic side of the membrane; it reads RLRSIRC. Residues 150–174 traverse the membrane as a helical segment; that stretch reads LRNIIHWNLISAFILRNATWFVVQL. Residues 175-189 lie on the Extracellular side of the membrane; the sequence is TVSPEVHQSNVAWCR. Cys188 and Cys258 are disulfide-bonded. Residues 190 to 218 form a helical membrane-spanning segment; it reads LVTAAYNYFHVTNFFWMFGEGCYLHTAIV. The Cytoplasmic portion of the chain corresponds to 219–225; it reads LTYSTDR. A helical transmembrane segment spans residues 226-253; the sequence is LRKWMFVCIGWGVPFPIIVAWAIGKLHY. The Extracellular portion of the chain corresponds to 254 to 269; sequence DNEKCWFGKRPGVYTD. A helical transmembrane segment spans residues 270–295; it reads YIYQGPMILVLLINFIFLFNIVRILM. Positions 280–290 are important for antagonist binding; that stretch reads LLINFIFLFNI. Residues 296 to 306 lie on the Cytoplasmic side of the membrane; that stretch reads TKLRASTTSET. A Phosphoserine; by PKA modification is found at Ser301. A helical membrane pass occupies residues 307 to 331; the sequence is IQYRKAVKATLVLLPLLGITYMLFF. At 332 to 338 the chain is on the extracellular side; that stretch reads VNPGEDE. A helical transmembrane segment spans residues 339–368; that stretch reads VSRVVFIYFNSFLESFQGFFVSVFYCFLNS. The Cytoplasmic segment spans residues 369–415; sequence EVRSAIRKRWRRWQDKHSIRARVARAMSIPTSPTRVSFHSIKQSTAV.

Belongs to the G-protein coupled receptor 2 family. Interacts (via N-terminal extracellular domain) with CRH and UCN. Interacts with DLG1; this inhibits endocytosis of CRHR1 after agonist binding. Heterodimer; heterodimerizes with GPER1. Post-translationally, C-terminal Ser or Thr residues may be phosphorylated. Phosphorylation at Ser-301 by PKA prevents maximal coupling to Gq-protein, and thereby negatively regulates downstream signaling. As to expression, detected in brain, especially in cerebellum. Detected in pituitary gland, and at lower levels in the olfactory bulb.

The protein localises to the cell membrane. It localises to the endosome. Its function is as follows. G-protein coupled receptor for CRH (corticotropin-releasing factor) and UCN (urocortin). Has high affinity for CRH and UCN. Ligand binding causes a conformation change that triggers signaling via guanine nucleotide-binding proteins (G proteins) and down-stream effectors, such as adenylate cyclase. Promotes the activation of adenylate cyclase, leading to increased intracellular cAMP levels. Inhibits the activity of the calcium channel CACNA1H. Required for normal embryonic development of the adrenal gland and for normal hormonal responses to stress. Plays a role in the response to anxiogenic stimuli. The chain is Corticotropin-releasing factor receptor 1 (Crhr1) from Rattus norvegicus (Rat).